A 220-amino-acid chain; its full sequence is Vesicle-associated protein 2-1 (220 aa).

Methionine 1 is subject to N-acetylmethionine. Topologically, residues 1 to 196 (MTGVGENQLI…RNSGNGLSLK (196 aa)) are cytoplasmic. The residue at position 2 (threonine 2) is an N-acetylthreonine; in Vesicle-associated protein 2-1, N-terminally processed. The 121-residue stretch at 9–129 (LISIQPDELK…TECKLKVSYI (121 aa)) folds into the MSP domain. Residues 133 to 154 (TTQRSSESGATNGDGQSSETIS) form a disordered region. The stretch at 153-188 (ISTIQRLKEERDAAVKQTQQLQHELETVRRRRNQRN) forms a coiled coil. A helical; Anchor for type IV membrane protein membrane pass occupies residues 197–217 (LAAMVGLIGLIIGFILKLTLA).

It belongs to the VAMP-associated protein (VAP) (TC 9.B.17) family.

Its subcellular location is the endoplasmic reticulum membrane. Its function is as follows. May play a role in vesicle trafficking. In Arabidopsis thaliana (Mouse-ear cress), this protein is Vesicle-associated protein 2-1 (PVA21).